A 209-amino-acid chain; its full sequence is Uracil phosphoribosyltransferase (209 aa).

5-phospho-alpha-D-ribose 1-diphosphate-binding positions include arginine 79, arginine 104, and 131–139 (DPMLATGGS). Residues isoleucine 194 and 199–201 (GDA) contribute to the uracil site. Aspartate 200 provides a ligand contact to 5-phospho-alpha-D-ribose 1-diphosphate.

This sequence belongs to the UPRTase family. Mg(2+) is required as a cofactor.

It catalyses the reaction UMP + diphosphate = 5-phospho-alpha-D-ribose 1-diphosphate + uracil. It functions in the pathway pyrimidine metabolism; UMP biosynthesis via salvage pathway; UMP from uracil: step 1/1. Allosterically activated by GTP. In terms of biological role, catalyzes the conversion of uracil and 5-phospho-alpha-D-ribose 1-diphosphate (PRPP) to UMP and diphosphate. This is Uracil phosphoribosyltransferase from Streptococcus uberis (strain ATCC BAA-854 / 0140J).